Consider the following 35-residue polypeptide: Cupiennin-2e (35 aa).

Glutamate 35 is subject to Glutamic acid 1-amide.

Expressed by the venom gland.

The protein resides in the secreted. This is Cupiennin-2e from Cupiennius salei (American wandering spider).